We begin with the raw amino-acid sequence, 556 residues long: Polypeptide N-acetylgalactosaminyltransferase 13 (556 aa).

Over 1-4 the chain is Cytoplasmic; it reads MRRF. Residues 5-27 traverse the membrane as a helical; Signal-anchor for type II membrane protein segment; it reads VYCKVVLATSLMWVLVDVFLLLY. Topologically, residues 28–556 are lumenal; sequence FSECNKCDDK…WLLRNMTLGT (529 aa). 2 N-linked (GlcNAc...) asparagine glycosylation sites follow: Asn-94 and Asn-116. 5 disulfide bridges follow: Cys-105–Cys-338, Cys-329–Cys-407, Cys-441–Cys-458, Cys-481–Cys-496, and Cys-522–Cys-539. The interval 114–224 is catalytic subdomain A; sequence LPNTSVVIVF…LGWLEPLLAR (111 aa). Positions 155 and 185 each coordinate substrate. Residues Asp-208 and His-210 each contribute to the Mn(2+) site. The segment at 284–346 is catalytic subdomain B; sequence PVRTPTMAGG…TCSHVGHVFR (63 aa). Trp-315 serves as a coordination point for substrate. Residue His-343 participates in Mn(2+) binding. Substrate is bound by residues Arg-346 and Tyr-351. The Ricin B-type lectin domain maps to 428–550; it reads YSLGEIRNVE…GSRSQQWLLR (123 aa). Asn-551 carries N-linked (GlcNAc...) asparagine glycosylation.

This sequence belongs to the glycosyltransferase 2 family. GalNAc-T subfamily. Mn(2+) is required as a cofactor. As to expression, specifically expressed in neuronal cells. Expressed in fetal brain, whole adult brain, cerebral cortex and cerebellum. Not expressed in other tissues tested.

The protein resides in the golgi apparatus membrane. The enzyme catalyses L-seryl-[protein] + UDP-N-acetyl-alpha-D-galactosamine = a 3-O-[N-acetyl-alpha-D-galactosaminyl]-L-seryl-[protein] + UDP + H(+). It carries out the reaction L-threonyl-[protein] + UDP-N-acetyl-alpha-D-galactosamine = a 3-O-[N-acetyl-alpha-D-galactosaminyl]-L-threonyl-[protein] + UDP + H(+). It participates in protein modification; protein glycosylation. Its function is as follows. Catalyzes the initial reaction in O-linked oligosaccharide biosynthesis, the transfer of an N-acetyl-D-galactosamine (GalNAc) residue from UDP-GalNAc to a serine or threonine residue on the protein receptor. Generates GalNAc-O-Ser/Thr structure also known as Tn antigen, which itself is immunogenic but also serves as a precursor for the synthesis of different mucin-type O-glycan core structures. Contributes to the synthesis of O-linked glycans on mucins and proteoglycans of the central nervous system. May promote neurogenesis through glycosylation and stabilization of PDPN. In terms of biological role, can glycosylate both unmodified peptides and glycopeptides that already contain an O-linked GalNAc sugar. Transfers GalNAc to Thr-/Ser-rich tandem repeats GTTPSPVPTTSTTSAP of MUC5AC, specifically on Thr-3 of non-glycosylated MUC5AC peptide, on Thr-12 and Thr-13 of preglycosylated MUC5AC at Thr-3 (MUC5AC-3), on Thr-3 of preglycosylated MUC5AC at Thr-13 (MUC5AC-13) and on Thr-12 of preglycosylated MUC5AC at Thr-3 and Thr-13 (MUC5AC-3,13). Transfers GalNAc to three consecutive serine/threonine residues on SDC3 forming a triplet-Tn epitope expressed in Purkinje cells of the developing brain. Can glycosylate both unmodified peptides and glycopeptides that already contain an O-linked GalNAc sugar. Transfers GalNAc to Thr-/Ser-rich tandem repeats GTTPSPVPTTSTTSAP of MUC5AC, specifically on Thr-3 of non-glycosylated MUC5AC peptide, on Thr-12 and Thr-13 of preglycosylated MUC5AC at Thr-3 (MUC5AC-3), on Thr-3 of preglycosylated MUC5AC at Thr-13 (MUC5AC-13) and on Thr-12 of preglycosylated MUC5AC at Thr-3 and Thr-13 (MUC5AC-3,13). This Homo sapiens (Human) protein is Polypeptide N-acetylgalactosaminyltransferase 13 (GALNT13).